The chain runs to 263 residues: Urease accessory protein UreH (263 aa).

This sequence belongs to the UreD family. As to quaternary structure, ureH, UreF and UreG form a complex that acts as a GTP-hydrolysis-dependent molecular chaperone, activating the urease apoprotein by helping to assemble the nickel containing metallocenter of UreC. The UreE protein probably delivers the nickel.

It is found in the cytoplasm. Functionally, required for maturation of urease via the functional incorporation of the urease nickel metallocenter. In Helicobacter acinonychis (strain Sheeba), this protein is Urease accessory protein UreH.